Reading from the N-terminus, the 299-residue chain is Mimecan (299 aa).

Positions 1–19 (MKTLQSTLLLFLFVPLIKP) are cleaved as a signal peptide. Asparagine 89 carries an N-linked (GlcNAc...) (keratan sulfate) asparagine glycan. LRR repeat units lie at residues 113 to 132 (DAVP…FNKI), 133 to 156 (KKLT…GNLI), 157 to 180 (EDIE…ENQL), 181 to 200 (LKLP…YNKI), 201 to 226 (KSRG…HNAL), 227 to 247 (ESVP…FNNI), and 248 to 278 (TSIT…GNPV). Asparagine 215 is a glycosylation site (N-linked (GlcNAc...) (keratan sulfate) asparagine). N-linked (GlcNAc...) asparagine glycosylation is present at asparagine 246. Cysteine 256 and cysteine 289 are joined by a disulfide. An N-linked (GlcNAc...) (keratan sulfate) asparagine glycan is attached at asparagine 259.

It belongs to the small leucine-rich proteoglycan (SLRP) family. SLRP class III subfamily. In terms of processing, contains keratan sulfate. Keratan sulfate attachment is observed in the cornea but the protein also exists in other tissues without keratan sulfate. The 12 kDa OIF in bone and the 25 kDa KSPG25 protein in cornea are probably proteolytic fragments. In terms of tissue distribution, bone and cornea.

It localises to the secreted. The protein localises to the extracellular space. Its subcellular location is the extracellular matrix. Its function is as follows. Induces bone formation in conjunction with TGF-beta-1 or TGF-beta-2. This is Mimecan (OGN) from Bos taurus (Bovine).